The following is a 385-amino-acid chain: Succinate--CoA ligase [ADP-forming] subunit beta (385 aa).

Residues 9–240 (KEIFAKYGIP…ETQLPQLEVE (232 aa)) enclose the ATP-grasp domain. Residues lysine 46, 53–55 (GRG), glutamate 98, threonine 101, and glutamate 106 contribute to the ATP site. Mg(2+) contacts are provided by asparagine 195 and aspartate 209. Substrate contacts are provided by residues asparagine 260 and 317–319 (GIL).

Belongs to the succinate/malate CoA ligase beta subunit family. In terms of assembly, heterotetramer of two alpha and two beta subunits. Requires Mg(2+) as cofactor.

It carries out the reaction succinate + ATP + CoA = succinyl-CoA + ADP + phosphate. The catalysed reaction is GTP + succinate + CoA = succinyl-CoA + GDP + phosphate. Its pathway is carbohydrate metabolism; tricarboxylic acid cycle; succinate from succinyl-CoA (ligase route): step 1/1. In terms of biological role, succinyl-CoA synthetase functions in the citric acid cycle (TCA), coupling the hydrolysis of succinyl-CoA to the synthesis of either ATP or GTP and thus represents the only step of substrate-level phosphorylation in the TCA. The beta subunit provides nucleotide specificity of the enzyme and binds the substrate succinate, while the binding sites for coenzyme A and phosphate are found in the alpha subunit. The polypeptide is Succinate--CoA ligase [ADP-forming] subunit beta (Aquifex aeolicus (strain VF5)).